The primary structure comprises 380 residues: 3-dehydroquinate synthase (380 aa).

Residues 68 to 73 (PGEPNK), 102 to 106 (GTVLD), 126 to 127 (TT), K139, and K148 each bind NAD(+). Positions 181, 243, and 259 each coordinate Zn(2+).

The protein belongs to the sugar phosphate cyclases superfamily. Dehydroquinate synthase family. The cofactor is NAD(+). Co(2+) is required as a cofactor. Zn(2+) serves as cofactor.

Its subcellular location is the cytoplasm. It catalyses the reaction 7-phospho-2-dehydro-3-deoxy-D-arabino-heptonate = 3-dehydroquinate + phosphate. The protein operates within metabolic intermediate biosynthesis; chorismate biosynthesis; chorismate from D-erythrose 4-phosphate and phosphoenolpyruvate: step 2/7. Its function is as follows. Catalyzes the conversion of 3-deoxy-D-arabino-heptulosonate 7-phosphate (DAHP) to dehydroquinate (DHQ). This Chlamydia pneumoniae (Chlamydophila pneumoniae) protein is 3-dehydroquinate synthase (aroB).